Consider the following 346-residue polypeptide: UDP-N-acetylenolpyruvoylglucosamine reductase (346 aa).

Residues 23–194 (FDVRARLACR…VSVTFRLPKV (172 aa)) enclose the FAD-binding PCMH-type domain. Arginine 170 is an active-site residue. Residue serine 246 is the Proton donor of the active site. Residue glutamate 342 is part of the active site.

The protein belongs to the MurB family. FAD is required as a cofactor.

It localises to the cytoplasm. It carries out the reaction UDP-N-acetyl-alpha-D-muramate + NADP(+) = UDP-N-acetyl-3-O-(1-carboxyvinyl)-alpha-D-glucosamine + NADPH + H(+). Its pathway is cell wall biogenesis; peptidoglycan biosynthesis. Its function is as follows. Cell wall formation. This Paraburkholderia phymatum (strain DSM 17167 / CIP 108236 / LMG 21445 / STM815) (Burkholderia phymatum) protein is UDP-N-acetylenolpyruvoylglucosamine reductase.